Consider the following 507-residue polypeptide: Ribonuclease Y (507 aa).

Residues 1–21 traverse the membrane as a helical segment; that stretch reads MLWYIVAGAGGLLIGYLIASY. A KH domain is found at 197 to 282; the sequence is TVSTVSLPSD…EMYEKAKQEV (86 aa). An HD domain is found at 323-416; it reads VLNHSIEVAL…VAAADALSAA (94 aa).

Belongs to the RNase Y family.

The protein localises to the cell membrane. Its function is as follows. Endoribonuclease that initiates mRNA decay. In Thermotoga petrophila (strain ATCC BAA-488 / DSM 13995 / JCM 10881 / RKU-1), this protein is Ribonuclease Y.